We begin with the raw amino-acid sequence, 460 residues long: Equilibrative nucleoside transporter 1 (460 aa).

The Cytoplasmic segment spans residues 1-12 (MTTSHQPQDRYK). Residues 13–29 (AVWLIFFVLGLGTLLPW) traverse the membrane as a helical segment. Residues 30–82 (NFFMTATKYFTNRLDVSQNVSSDTDQSCESTKALADPTVALPARSSLSAIFNN) are Extracellular-facing. An N-linked (GlcNAc...) asparagine glycan is attached at Asn-48. A helical transmembrane segment spans residues 83–107 (VMTLCAMLPLLVFTCLNSFLHQRIS). Residues 108-111 (QSVR) are Cytoplasmic-facing. A helical transmembrane segment spans residues 112–130 (ILGSLLAILLVFLVTAALV). Topologically, residues 131–138 (KVEMDALI) are extracellular. Residues 139 to 157 (FFVITMIKIVLINSFGAIL) form a helical membrane-spanning segment. Residues 158 to 174 (QASLFGLAGVLPANYTA) are Cytoplasmic-facing. Residues 175-199 (PIMSGQGLAGFFTSVAMICAIASGS) form a helical membrane-spanning segment. At 200–206 (ELSESAF) the chain is on the extracellular side. The chain crosses the membrane as a helical span at residues 207–227 (GYFITACAVVILAILCYLALP). Over 228–291 (RTEFYRHYLQ…IKAILKSICV (64 aa)) the chain is Cytoplasmic. Ser-254 bears the Phosphoserine mark. The segment covering 255 to 266 (KGEEPKGRREES) has biased composition (basic and acidic residues). The disordered stretch occupies residues 255-277 (KGEEPKGRREESGVPGPNSPPTN). At Ser-273 the chain carries Phosphoserine. A helical transmembrane segment spans residues 292 to 311 (PALSVCFIFTVTIGLFPAVT). Residues 312-323 (AEVESSIAGTSP) lie on the Extracellular side of the membrane. Residues 324-342 (WKSYFIPVACFLNFNVFDW) traverse the membrane as a helical segment. Residues 343–359 (LGRSLTAVCMWPGQDSR) are Cytoplasmic-facing. Residues 360–378 (WLPVLVASRIVFIPLLMLC) traverse the membrane as a helical segment. At 379-397 (NVKARHCGAQRHHFVFKHD) the chain is on the extracellular side. A helical membrane pass occupies residues 398–417 (AWFIAFMAAFAFSNGYLASL). Residues 418-435 (CMCFGPKKVKPAEAETAG) are Cytoplasmic-facing. A helical transmembrane segment spans residues 436–456 (NIMSFFLCLGLALGAVLSFLL). Residues 457–460 (RALV) lie on the Extracellular side of the membrane.

It belongs to the SLC29A/ENT transporter (TC 2.A.57) family. As to quaternary structure, identified in a complex with STOM. In terms of processing, glycosylated. In terms of tissue distribution, highly expressed in heart, spleen, lung, liver and testis. Lower level of expression in brain and kidney. Expressed in adipose tissues, brown adipocytes expressing significantly higher amounts than white adipocytes. Expressed in seminiferous tubules.

It localises to the basolateral cell membrane. The protein resides in the apical cell membrane. It is found in the cell membrane. The catalysed reaction is adenosine(in) = adenosine(out). It carries out the reaction guanosine(in) = guanosine(out). It catalyses the reaction inosine(in) = inosine(out). The enzyme catalyses uridine(out) = uridine(in). The catalysed reaction is thymidine(in) = thymidine(out). It carries out the reaction cytidine(in) = cytidine(out). It catalyses the reaction adenine(out) = adenine(in). The enzyme catalyses guanine(out) = guanine(in). The catalysed reaction is thymine(out) = thymine(in). It carries out the reaction uracil(in) = uracil(out). It catalyses the reaction hypoxanthine(out) = hypoxanthine(in). Transporter activity is sensitive to low concentrations of the inhibitor nitrobenzylmercaptopurine riboside (NBMPR). Functionally, uniporter involved in the facilitative transport of nucleosides and nucleobases, and contributes to maintaining their cellular homeostasis. Functions as a Na(+)-independent transporter. Involved in the transport of nucleosides such as adenosine, guanosine, inosine, uridine, thymidine and cytidine. Also transports purine (hypoxanthine, adenine, guanine) and pyrimidine nucleobases (thymine, uracil). Mediates basolateral nucleoside uptake into Sertoli cells, thereby regulating the transport of nucleosides in testis across the blood-testis-barrier. Regulates inosine levels in brown adipocytes tissues (BAT) and extracellular inosine levels, which controls BAT-dependent energy expenditure. The protein is Equilibrative nucleoside transporter 1 of Mus musculus (Mouse).